The sequence spans 412 residues: Polyferredoxin protein MvhB (412 aa).

12 consecutive 4Fe-4S ferredoxin-type domains span residues 2 to 29 (IIVN…VTPE), 30 to 57 (DVIY…LEDL), 67 to 96 (GRIV…LDEG), 97 to 127 (KVKK…VEGI), 138 to 166 (EGPI…LDKV), 168 to 197 (GVIE…ISGR), 207 to 236 (KKFE…PRTS), 238 to 266 (LTVE…LEVE), 276 to 305 (EGLV…VVTK), 314 to 345 (EKVD…LVDM), 357 to 386 (KRVQ…LTDE), and 385 to 412 (DEKV…LSLK). Cysteine 9, cysteine 12, cysteine 15, and cysteine 19 together coordinate [4Fe-4S] cluster. [4Fe-4S] cluster-binding residues include cysteine 76, cysteine 79, cysteine 82, cysteine 86, cysteine 107, cysteine 110, cysteine 113, cysteine 117, cysteine 146, cysteine 149, cysteine 152, cysteine 156, cysteine 177, cysteine 180, cysteine 183, cysteine 187, cysteine 216, cysteine 219, cysteine 222, cysteine 226, cysteine 246, cysteine 249, cysteine 252, and cysteine 256. The [4Fe-4S] cluster site is built by cysteine 325, cysteine 328, cysteine 331, cysteine 335, cysteine 366, cysteine 369, cysteine 372, cysteine 376, cysteine 394, cysteine 397, cysteine 400, and cysteine 404.

[4Fe-4S] cluster is required as a cofactor.

This chain is Polyferredoxin protein MvhB (mvhB), found in Methanothermobacter thermautotrophicus (strain ATCC 29096 / DSM 1053 / JCM 10044 / NBRC 100330 / Delta H) (Methanobacterium thermoautotrophicum).